We begin with the raw amino-acid sequence, 184 residues long: ATP synthase subunit b, chloroplastic (184 aa).

Residues 27-49 traverse the membrane as a helical segment; sequence LATNPINLSVVLGVLIFFGKGVL.

The protein belongs to the ATPase B chain family. In terms of assembly, F-type ATPases have 2 components, F(1) - the catalytic core - and F(0) - the membrane proton channel. F(1) has five subunits: alpha(3), beta(3), gamma(1), delta(1), epsilon(1). F(0) has four main subunits: a(1), b(1), b'(1) and c(10-14). The alpha and beta chains form an alternating ring which encloses part of the gamma chain. F(1) is attached to F(0) by a central stalk formed by the gamma and epsilon chains, while a peripheral stalk is formed by the delta, b and b' chains.

The protein resides in the plastid. Its subcellular location is the chloroplast thylakoid membrane. In terms of biological role, f(1)F(0) ATP synthase produces ATP from ADP in the presence of a proton or sodium gradient. F-type ATPases consist of two structural domains, F(1) containing the extramembraneous catalytic core and F(0) containing the membrane proton channel, linked together by a central stalk and a peripheral stalk. During catalysis, ATP synthesis in the catalytic domain of F(1) is coupled via a rotary mechanism of the central stalk subunits to proton translocation. Its function is as follows. Component of the F(0) channel, it forms part of the peripheral stalk, linking F(1) to F(0). The polypeptide is ATP synthase subunit b, chloroplastic (Morus indica (Mulberry)).